Here is an 893-residue protein sequence, read N- to C-terminus: Nitrate reductase [NADPH] (893 aa).

The segment at Met1–Arg83 is disordered. Over residues Pro55–Pro65 the composition is skewed to pro residues. Residues Asp71–Arg83 show a composition bias toward basic and acidic residues. A Mo-molybdopterin-binding site is contributed by Cys170. The Cytochrome b5 heme-binding domain maps to Asn536 to Ser611. 2 residues coordinate heme: His571 and His594. An FAD-binding FR-type domain is found at Arg641 to Leu752. FAD is bound by residues Arg695–Thr698, Leu712–Tyr716, Lys726–Thr728, Ser776, and Thr779. NADP(+) is bound at residue Leu863 to Leu872.

This sequence belongs to the nitrate reductase family. In terms of assembly, homodimer. FAD is required as a cofactor. The cofactor is heme. It depends on Mo-molybdopterin as a cofactor.

The catalysed reaction is nitrite + NADP(+) + H2O = nitrate + NADPH + H(+). Its function is as follows. Nitrate reductase is a key enzyme involved in the first step of nitrate assimilation in plants, fungi and bacteria. This Leptosphaeria maculans (Blackleg fungus) protein is Nitrate reductase [NADPH] (NIAD).